Here is a 192-residue protein sequence, read N- to C-terminus: Signal peptidase complex subunit 2 (192 aa).

Topologically, residues 1 to 46 (MEEKKTESTNKNVKKANLLDHHSIKHILDESVSDIVTSRGYKEDVR) are cytoplasmic. A helical membrane pass occupies residues 47–69 (LSNLKLILGTIIIVVALVAQFYN). Residues 70–78 (KKFPENRDF) are Lumenal-facing. The chain crosses the membrane as a helical span at residues 79 to 98 (LIGCIALYVVLNAVLQLILY). The Cytoplasmic portion of the chain corresponds to 99-192 (TKEKNAILFT…YAEEEPKKKK (94 aa)).

This sequence belongs to the SPCS2 family. In terms of assembly, component of the signal peptidase complex (SPC) composed of a catalytic subunit SEC11 and three accessory subunits SPCS1, SPCS2 and SPCS3. The complex induces a local thinning of the ER membrane which is used to measure the length of the signal peptide (SP) h-region of protein substrates. This ensures the selectivity of the complex towards h-regions shorter than 18-20 amino acids.

It is found in the endoplasmic reticulum membrane. Functionally, component of the signal peptidase complex (SPC) which catalyzes the cleavage of N-terminal signal sequences from nascent proteins as they are translocated into the lumen of the endoplasmic reticulum. Enhances the enzymatic activity of SPC and facilitates the interactions between different components of the translocation site. This Arabidopsis thaliana (Mouse-ear cress) protein is Signal peptidase complex subunit 2.